A 438-amino-acid polypeptide reads, in one-letter code: Acyl-CoA dehydrogenase apdG (438 aa).

It belongs to the acyl-CoA dehydrogenase family. FAD serves as cofactor.

It participates in secondary metabolite biosynthesis. Acyl-CoA dehydrogenase; part of the gene cluster that mediates the biosynthesis of aspyridones. The polyketide-amino acid backbone preaspyridone A is first assembled by the PKS-NRPS hybrid apdA. The assembly of preaspyridone A is initiated by loading of malonyl-CoA onto apdA, followed by decarboxylation to yield the acetyl starter unit. The growing polyketide chain then elongates into a tetraketide. The adpA PKS module catalyzes three Claisen condensations, as well as beta-keto processing and methylation. Alpha-methylation step during polyketide synthesis is a prerequisite and a key checkpoint for chain transfer between PKS and NRPS modules. The downstream NRPS module contains the condensation (C), adenylation (A), and thiolation (T) domains and catalyzes the incorporation of tyrosine via the formation of the L-tyrosinyl-thioester and the amide linkage between L-tyrosinyl-thioester and the tetraketide. The bimodular assembly line is terminated with a reductase (R) domain that facilitates formation and release of the tetramic acid product. Because apdA lacks a designated enoylreductase (ER) domain, the required activity is provided the enoyl reductase apdC. ApdC appears to operate with different stereoselectivity in different PKS cycle. Combined with apdC, apdA is proposed to synthesize preaspyridone A via about 20 enzymatic steps. A number of oxidative steps performed successively by the cytochrome P450 monooxygenases apdE and apdB are required for the conversion of preaspyridone A to aspyridone A. The cytochrome P450 monooxygenase apdE is responsible for the oxidative dephenylation of preaspyridone A. Finally, the predicted FAD-dependent monooxygenase apdD and the acyl-CoA dehydrogenase apdG may be involved in the transformation of aspyridone A into aspyridone B. The protein is Acyl-CoA dehydrogenase apdG of Emericella nidulans (strain FGSC A4 / ATCC 38163 / CBS 112.46 / NRRL 194 / M139) (Aspergillus nidulans).